Consider the following 164-residue polypeptide: Transcription elongation factor GreA (164 aa).

Positions 11-76 (EESYDRLKAE…LQELLNNAKV (66 aa)) form a coiled coil.

Belongs to the GreA/GreB family.

In terms of biological role, necessary for efficient RNA polymerase transcription elongation past template-encoded arresting sites. The arresting sites in DNA have the property of trapping a certain fraction of elongating RNA polymerases that pass through, resulting in locked ternary complexes. Cleavage of the nascent transcript by cleavage factors such as GreA or GreB allows the resumption of elongation from the new 3'terminus. GreA releases sequences of 2 to 3 nucleotides. The polypeptide is Transcription elongation factor GreA (Mycolicibacterium vanbaalenii (strain DSM 7251 / JCM 13017 / BCRC 16820 / KCTC 9966 / NRRL B-24157 / PYR-1) (Mycobacterium vanbaalenii)).